The sequence spans 560 residues: Eukaryotic translation initiation factor 3 subunit D-1 (560 aa).

The disordered stretch occupies residues 98 to 166; it reads VQKPPHQRGR…RGPPPKMRES (69 aa). Over residues 100–121 the composition is skewed to basic residues; that stretch reads KPPHQRGRFRNMRNSRSGRGRN. At threonine 128 the chain carries Phosphothreonine. Over residues 147-156 the composition is skewed to basic residues; it reads GRGMGKKFGH. The RNA gate stretch occupies residues 291-305; sequence EFDLLTVNESSVEPP.

It belongs to the eIF-3 subunit D family. As to quaternary structure, component of the eukaryotic translation initiation factor 3 (eIF-3) complex. The eIF-3 complex interacts with pix.

The protein localises to the cytoplasm. Functionally, mRNA cap-binding component of the eukaryotic translation initiation factor 3 (eIF-3) complex, which is involved in protein synthesis of a specialized repertoire of mRNAs and, together with other initiation factors, stimulates binding of mRNA and methionyl-tRNAi to the 40S ribosome. The eIF-3 complex specifically targets and initiates translation of a subset of mRNAs involved in cell proliferation. In the eIF-3 complex, eif3d specifically recognizes and binds the 7-methylguanosine cap of a subset of mRNAs. This is Eukaryotic translation initiation factor 3 subunit D-1 from Drosophila simulans (Fruit fly).